A 247-amino-acid chain; its full sequence is 14-3-3 protein gamma (247 aa).

The residue at position 1 (Met1) is an N-acetylmethionine; in 14-3-3 protein gamma; alternate; partial. Val2 bears the N-acetylvaline; in 14-3-3 protein gamma, N-terminally processed; partial mark. Val2 carries the N-acetylvaline; partial modification. The tract at residues Val2–Gln166 is required for interaction with SPATA18/MIEAP (isoform 2) but dispensable for binding to SPATA18/MIEAP (isoform 1). An interaction with SPATA18/MIEAP region spans residues Val2 to Asn247. Ser71 carries the phosphoserine modification. Position 133 is a phosphotyrosine (Tyr133). A Phosphothreonine modification is found at Thr145. Ser215 carries the post-translational modification Phosphoserine. A Phosphothreonine modification is found at Thr234. Ser235 carries the phosphoserine modification.

Belongs to the 14-3-3 family. As to quaternary structure, homodimer. Part of a complex that contains DSG3, PKP1, YAP1 and YWHAG; the complex is required for localization of DSG3 and YAP1 to the cell membrane in keratinocytes. Interacts with SAMSN1. Interacts with RAF1, SSH1 and CRTC2/TORC2. Interacts with ABL1 (phosphorylated form); the interaction retains it in the cytoplasm. Interacts with GAB2. Interacts with MDM4 (phosphorylated); negatively regulates MDM4 activity toward TP53. Interacts with PKA-phosphorylated AANAT and SIRT2. Interacts with the 'Thr-369' phosphorylated form of DAPK2. Interacts with PI4KB, TBC1D22A and TBC1D22B. Interacts with SLITRK1. Interacts with LRRK2; this interaction is dependent on LRRK2 phosphorylation. Interacts with MARK2 and MARK3. Interacts with MEFV. Interacts with ENDOG, TSC2 and PIK3C3; interaction with ENDOG weakens its interaction with TSC2 and PIK3C3. Interacts with (phosphorylated) WDR24. Interacts with BEST1; this interaction promotes L-glutamate channel activity leading to the positive regulation of NMDA glutamate receptor activity through the L-glutamate secretion. Interacts with PKP1 (when phosphorylated); the interaction results in translocation of PKP1 to the cytoplasm and loss of intercellular adhesion in keratinocytes. Interacts with SPATA18/MIEAP (isoforms 1 and 2); a protein that also plays a role in MALM. In terms of processing, phosphorylated by various PKC isozymes. In terms of tissue distribution, highly expressed in brain, skeletal muscle, and heart.

The protein localises to the cytoplasm. The protein resides in the cytosol. It localises to the mitochondrion matrix. Functionally, adapter protein implicated in the regulation of a large spectrum of both general and specialized signaling pathways. Binds to a large number of partners, usually by recognition of a phosphoserine or phosphothreonine motif. Binding generally results in the modulation of the activity of the binding partner. Promotes inactivation of WDR24 component of the GATOR2 complex by binding to phosphorylated WDR24. Participates in the positive regulation of NMDA glutamate receptor activity by promoting the L-glutamate secretion through interaction with BEST1. Reduces keratinocyte intercellular adhesion, via interacting with PKP1 and sequestering it in the cytoplasm, thereby reducing its incorporation into desmosomes. Plays a role in mitochondrial protein catabolic process (also named MALM) that promotes the degradation of damaged proteins inside mitochondria. This chain is 14-3-3 protein gamma, found in Homo sapiens (Human).